The sequence spans 113 residues: Protein S100-A9 (113 aa).

The residue at position 2 (Ala2) is an N-acetylalanine. EF-hand domains lie at Ile13–Thr48 and Arg55–Ala90. His21 is a Zn(2+) binding site. 2 residues coordinate Ca(2+): Ser24 and His29. Residue Asp31 coordinates Zn(2+). The Ca(2+) site is built by Thr32, Glu37, Asp68, Asn70, Asp72, Gln74, and Glu79. Residues His92 and His96 each contribute to the Zn(2+) site. His107 bears the Pros-methylhistidine mark.

It belongs to the S-100 family. Homodimer. Preferentially exists as a heterodimer or heterotetramer with S100A8 known as calprotectin (S100A8/A9). S100A9 interacts with ATP2A2. S100A9 interacts with AGER, and with the heterodimeric complex formed by TLR4 and LY96 in the presence of calcium and/or zinc ions. S100A9 binds quinoline-3-carboxamides in the presence of calcium and/or zinc ions. S100A9 interacts with amyloid-beta protein 40. Calprotectin (S100A8/9) interacts with CEACAM3 and tubulin filaments in a calcium-dependent manner. Heterotetrameric calprotectin (S100A8/A9) interacts with ANXA6 and associates with tubulin filaments in activated monocytes. Calprotectin (S100A8/9) interacts with NCF2/P67PHOX, RAC1, RAC2, CYBA and CYBB. Calprotectin (S100A8/9) interacts with NOS2 to form the iNOS-S100A8/A9 transnitrosylase complex; induced by LDL(ox). Calprotectin (S100A8/9) interacts with CD69. In terms of processing, phosphorylated. Phosphorylation inhibits activation of tubulin polymerization. Post-translationally, methylation at His-107 by METTL9 reduces zinc-binding without affecting heterodimerization with S100A8.

It localises to the secreted. It is found in the cytoplasm. The protein localises to the cytoskeleton. The protein resides in the cell membrane. Its function is as follows. S100A9 is a calcium- and zinc-binding protein which plays a prominent role in the regulation of inflammatory processes and immune response. It can induce neutrophil chemotaxis, adhesion, can increase the bactericidal activity of neutrophils by promoting phagocytosis via activation of SYK, PI3K/AKT, and ERK1/2 and can induce degranulation of neutrophils by a MAPK-dependent mechanism. Predominantly found as calprotectin (S100A8/A9) which has a wide plethora of intra- and extracellular functions. The intracellular functions include: facilitating leukocyte arachidonic acid trafficking and metabolism, modulation of the tubulin-dependent cytoskeleton during migration of phagocytes and activation of the neutrophilic NADPH-oxidase. Also participates in regulatory T-cell differentiation together with CD69. Activates NADPH-oxidase by facilitating the enzyme complex assembly at the cell membrane, transferring arachidonic acid, an essential cofactor, to the enzyme complex and S100A8 contributes to the enzyme assembly by directly binding to NCF2/P67PHOX. The extracellular functions involve pro-inflammatory, antimicrobial, oxidant-scavenging and apoptosis-inducing activities. Its pro-inflammatory activity includes recruitment of leukocytes, promotion of cytokine and chemokine production, and regulation of leukocyte adhesion and migration. Acts as an alarmin or a danger associated molecular pattern (DAMP) molecule and stimulates innate immune cells via binding to pattern recognition receptors such as Toll-like receptor 4 (TLR4) and receptor for advanced glycation endproducts (AGER). Binding to TLR4 and AGER activates the MAP-kinase and NF-kappa-B signaling pathways resulting in the amplification of the pro-inflammatory cascade. Has antimicrobial activity towards bacteria and fungi and exerts its antimicrobial activity probably via chelation of Zn(2+) which is essential for microbial growth. Can induce cell death via autophagy and apoptosis and this occurs through the cross-talk of mitochondria and lysosomes via reactive oxygen species (ROS) and the process involves BNIP3. Can regulate neutrophil number and apoptosis by an anti-apoptotic effect; regulates cell survival via ITGAM/ITGB and TLR4 and a signaling mechanism involving MEK-ERK. Its role as an oxidant scavenger has a protective role in preventing exaggerated tissue damage by scavenging oxidants. The iNOS-S100A8/A9 transnitrosylase complex is proposed to direct selective inflammatory stimulus-dependent S-nitrosylation of multiple targets such as GAPDH, NXA5, EZR, MSN and VIM by recognizing a [IL]-x-C-x-x-[DE] motif. The polypeptide is Protein S100-A9 (S100a9) (Mus musculus (Mouse)).